Reading from the N-terminus, the 315-residue chain is tRNA pseudouridine synthase B (315 aa).

Asp47 functions as the Nucleophile in the catalytic mechanism.

It belongs to the pseudouridine synthase TruB family. Type 1 subfamily.

It carries out the reaction uridine(55) in tRNA = pseudouridine(55) in tRNA. In terms of biological role, responsible for synthesis of pseudouridine from uracil-55 in the psi GC loop of transfer RNAs. This chain is tRNA pseudouridine synthase B, found in Shewanella pealeana (strain ATCC 700345 / ANG-SQ1).